Here is a 530-residue protein sequence, read N- to C-terminus: AP-4 complex subunit mu (530 aa).

The interval P164–T187 is disordered. Residues S173–S186 are compositionally biased toward low complexity. The 301-residue stretch at D227–R527 folds into the MHD domain.

Belongs to the adaptor complexes medium subunit family. In terms of assembly, may be part of the adaptor protein complex 4 (AP-4), a heterotetramer composed of two large adaptins (epsilon-type subunitand beta-type subunit), a medium adaptin (mu-type subunit) and a small adaptin (sigma-type).

It is found in the golgi apparatus. Its subcellular location is the trans-Golgi network membrane. It localises to the early endosome. Functionally, probable component of an adaptor protein complex. Adaptor protein complexes are vesicle coat components involved both in vesicle formation and cargo selection. They control the vesicular transport of proteins in different trafficking pathways. The polypeptide is AP-4 complex subunit mu (apm4) (Dictyostelium discoideum (Social amoeba)).